The chain runs to 273 residues: Bidirectional sugar transporter SWEET1a (273 aa).

The Extracellular portion of the chain corresponds to 1-6 (MEHIAR). The helical transmembrane segment at 7–27 (FFFGVSGNVIALFLFLSPVVT) threads the bilayer. Positions 7 to 95 (FFFGVSGNVI…VIFLIFAERK (89 aa)) constitute a MtN3/slv 1 domain. Over 28–42 (FWRIIKKRSTEDFSG) the chain is Cytoplasmic. A helical transmembrane segment spans residues 43–63 (VPYNMTLLNCLLSAWYGLPFV). Residues 64–71 (SPNNILVT) are Extracellular-facing. The chain crosses the membrane as a helical span at residues 72 to 92 (TINGTGSVIEAIYVVIFLIFA). Residues 93–101 (ERKARLKMM) lie on the Cytoplasmic side of the membrane. Residues 102-122 (GLLGLVTSIFTMVVLVSLLAL) form a helical membrane-spanning segment. Residues 123-128 (HGQGRK) are Extracellular-facing. Residues 129–149 (LFCGLAATIFSICMYASPLSI) traverse the membrane as a helical segment. A MtN3/slv 2 domain is found at 131-214 (CGLAATIFSI…ILYAIYRNHK (84 aa)). At 150–163 (MRLVIKTKSVEFMP) the chain is on the cytoplasmic side. A helical membrane pass occupies residues 164–184 (FLLSLSVFLCGTSWFIYGLLG). At 185–188 (RDPF) the chain is on the extracellular side. A helical transmembrane segment spans residues 189-209 (IAIPNGCGSFLGLMQLILYAI). Residues 210–273 (YRNHKGATPA…SADDKVASQV (64 aa)) lie on the Cytoplasmic side of the membrane.

Belongs to the SWEET sugar transporter family. As to quaternary structure, forms homooligomers and/or heterooligomers.

It is found in the cell membrane. Its function is as follows. Mediates both low-affinity uptake and efflux of sugar across the plasma membrane. The protein is Bidirectional sugar transporter SWEET1a (SWEET1A) of Oryza sativa subsp. japonica (Rice).